Consider the following 621-residue polypeptide: Glutathione-regulated potassium-efflux system protein KefC (621 aa).

A run of 12 helical transmembrane segments spans residues 9–29 (ALIY…LGLG), 30–50 (SVLG…RLVN), 54–74 (AILH…GLEL), 90–110 (GALQ…LLGL), 114–134 (VAEL…MQAM), 149–169 (FAVL…IPLL), 178–198 (LMAF…VVVL), 232–252 (LLLE…GVLL), 270–290 (GLLL…APWS), 296–316 (IVIL…LIAQ), 326–346 (RWFA…FGPA), and 359–379 (ALTL…VLLT). The 120-residue stretch at 399 to 518 (QPRVIVAGFG…AGVEAPERET (120 aa)) folds into the RCK N-terminal domain. Residues 598–621 (GWQGTEEGRHTGDIADEPENKPSA) form a disordered region.

The protein belongs to the monovalent cation:proton antiporter 2 (CPA2) transporter (TC 2.A.37) family. KefC subfamily. In terms of assembly, homodimer. Interacts with the regulatory subunit KefF.

Its subcellular location is the cell inner membrane. In terms of biological role, pore-forming subunit of a potassium efflux system that confers protection against electrophiles. Catalyzes K(+)/H(+) antiport. The chain is Glutathione-regulated potassium-efflux system protein KefC from Klebsiella aerogenes (Enterobacter aerogenes).